Here is a 243-residue protein sequence, read N- to C-terminus: Aspartate/glutamate leucyltransferase (243 aa).

The protein belongs to the R-transferase family. Bpt subfamily.

It is found in the cytoplasm. The enzyme catalyses N-terminal L-glutamyl-[protein] + L-leucyl-tRNA(Leu) = N-terminal L-leucyl-L-glutamyl-[protein] + tRNA(Leu) + H(+). It catalyses the reaction N-terminal L-aspartyl-[protein] + L-leucyl-tRNA(Leu) = N-terminal L-leucyl-L-aspartyl-[protein] + tRNA(Leu) + H(+). In terms of biological role, functions in the N-end rule pathway of protein degradation where it conjugates Leu from its aminoacyl-tRNA to the N-termini of proteins containing an N-terminal aspartate or glutamate. This is Aspartate/glutamate leucyltransferase from Teredinibacter turnerae (strain ATCC 39867 / T7901).